Reading from the N-terminus, the 129-residue chain is Protein Turandot A (129 aa).

The N-terminal stretch at 1 to 21 (MNSLTGFMCCALLLISPLCMG) is a signal peptide. Residue Asn49 is glycosylated (N-linked (GlcNAc...) asparagine).

Belongs to the Turandot family.

Its subcellular location is the secreted. In terms of biological role, a humoral factor that plays a role in stress tolerance; gives increased resistance to the lethal effects of bacterial challenge and stress. Regulated by the JAK/STAT pathway and NF-KB-like Relish pathway in the fat body, upd3 in the hemocytes and Mekk1 in response to septic injury and consequent immune response. The chain is Protein Turandot A (TotA) from Drosophila yakuba (Fruit fly).